Reading from the N-terminus, the 378-residue chain is Stimulator of interferon genes protein (378 aa).

The Cytoplasmic portion of the chain corresponds to 1-17 (MPHSSLHPSIPQPRGLR). Residues 1–190 (MPHSSLHPSI…IYNQFHNNTL (190 aa)) are mediates interaction with ZDHHC1 and ZDHHC11. A helical transmembrane segment spans residues 18 to 34 (AQKAALVLLSACLVALW). Over 35-44 (GLGEPPDYTL) the chain is Lumenal. The helical transmembrane segment at 45–69 (KWLVLHLASQQMGLLIKGICSLAEE) threads the bilayer. Topologically, residues 70 to 91 (LCHVHSRYHGSYWRAVRACLCS) are cytoplasmic. The S-palmitoyl cysteine moiety is linked to residue Cys88. A helical membrane pass occupies residues 92 to 106 (SMRCGALLLLSCYFY). The Lumenal portion of the chain corresponds to 107–116 (CSLPNMADLP). Residues 117-134 (FTWMLALLGLSQALNILL) traverse the membrane as a helical segment. Residues 135–378 (GLQGLAPAEV…KPLPLRSDVF (244 aa)) are Cytoplasmic-facing. Lys150 participates in a covalent cross-link: Glycyl lysine isopeptide (Lys-Gly) (interchain with G-Cter in ubiquitin). Residues 153-339 (FNVAHGLAWS…LQHLRQEERE (187 aa)) form a cyclic dinucleotide-binding domain (CBD) region. Residues Ser162 and Tyr167 each contribute to the 2',3'-cGAMP site. Ser162 and Tyr167 together coordinate 3',3'-c-di-GMP. Position 167 (Tyr167) interacts with 2',3'-cUAMP. Lys236 is covalently cross-linked (Glycyl lysine isopeptide (Lys-Gly) (interchain with G-Cter in ubiquitin)). 2',3'-cGAMP-binding residues include Arg238 and Thr263. Positions 238 and 263 each coordinate 2',3'-cUAMP. 3',3'-c-di-GMP is bound by residues 238–241 (RVYT) and Thr263. The interval 339-378 (EVTMGSTETSVMPGSSVLSQEPELLISGLEKPLPLRSDVF) is C-terminal tail (CTT). Ser354 bears the Phosphoserine mark. 2 positions are modified to phosphoserine; by TBK1: Ser357 and Ser365. Positions 362–365 (LLIS) match the pLxIS motif motif.

It belongs to the STING family. As to quaternary structure, homodimer; forms a homodimer in absence of cyclic nucleotide (c-di-GMP or cGAMP); 'Lys-63'-linked ubiquitination at Lys-150 is required for homodimerization. Homotetramer; in presence of cyclic nucleotide (c-di-GMP or cGAMP), forms tetramers and higher-order oligomers through side-by-side packing. Interacts (when phosphorylated) with IRF3; following activation and phosphorylation on the pLxIS motif by TBK1, recruits IRF3. Interacts with RIGI, MAVS and SSR2. Interacts with RNF5 and TRIM56. Interacts with TBK1; when homodimer, leading to subsequent production of IFN-beta. Interacts with IFIT1 and IFIT2. Interacts with TRIM29; this interaction induces STING1 ubiquitination and subsequent degradation. Associates with the MHC-II complex. Interacts with STEEP1; interaction takes place upon cGAMP-activation and STING1 phosphorylation by MAP3K7/TAK1 and promotes STING1 translocation to COPII vesicles. Interacts with SEC24A, SEC24B and SEC24C; promoting translocation to COPII vesicles. Interacts (when ubiquitinated) with SQSTM1; leading to relocalization to autophagosomes. Interacts with SURF4. Interacts with HNRNPA2B1. Interacts with ZDHHC1; ZDHHC1 constitutively interacts with STING1 and in presence of DNA viruses activates it by promoting its cGAMP-induced oligomerization and the recruitment of downstream signaling components. Interacts with ZDHHC11; in presence of DNA viruses promotes the recruitment of IRF3 to STING1. Interacts with TOMM70. Interacts with TAB1; promoting recruitment of TAB1 to the endoplasmic reticulum membrane and subsequent activation of MAP3K7/TAK1. Interacts (via transmembrane domain) with TMEM203. Interacts with DDX41. In terms of processing, phosphorylation by TBK1 leads to activation and production of IFN-beta. Following cyclic nucleotide (c-di-GMP or cGAMP)-binding, activation and translocation from the endoplasmic reticulum, STING1 is phosphorylated by TBK1 at Ser-365 in the pLxIS motif. The phosphorylated pLxIS motif constitutes an IRF3-binding motif, leading to recruitment of the transcription factor IRF3 to induce type-I interferons and other cytokines. Phosphorylated on tyrosine residues upon MHC-II aggregation. Dephosphorylation by PPP6C leads to inactivation and decreased production of IFN-beta. Phosphorylation at Ser-357 is also required to activate IRF3. Phosphorylation at Ser-354 by MAP3K7/TAK1 facilitates its interaction with STEEP1, promoting STING1 translocation to COPII vesicles. Ubiquitinated. Ubiquitinated via 'Lys-63'-linked ubiquitin chains in response to double-stranded DNA treatment, leading to relocalization to autophagosomes and subsequent degradation; this process is dependent on SQSTM1. 'Lys-63'-linked ubiquitination mediated by TRIM56 at Lys-150 promotes homodimerization and recruitment of the antiviral kinase TBK1 and subsequent production of IFN-beta. 'Lys-48'-linked polyubiquitination at Lys-150 occurring after viral infection is mediated by RNF5 and leads to proteasomal degradation. 'Lys-11'-linked polyubiquitination at Lys-150 by RNF26 leads to stabilize STING1: it protects STING1 from RNF5-mediated 'Lys-48'-linked polyubiquitination. 'Lys-33'-linked and 'Lys-48'-linked deubiquitinated by USP20; leading to its stabilization and promotion of innate antiviral response. 'Lys-48'-linked deubiquitinated by USP44; leading to its stabilization and promotion of innate antiviral response. 'Lys-63'-linked deubiquitinated by USP49; leading to inhibition of the subsequent recruitment of TBK1 to the signaling complex. 'Lys-63'-linked ubiquitination mediated by RNF39 promotes the activation of the cGAS-STING pathway. Post-translationally, palmitoylation takes place in the Golgi apparatus and creates a platform for the recruitment of TBK1.

It localises to the endoplasmic reticulum membrane. It is found in the cytoplasm. The protein resides in the perinuclear region. Its subcellular location is the endoplasmic reticulum-Golgi intermediate compartment membrane. The protein localises to the golgi apparatus membrane. It localises to the cytoplasmic vesicle. It is found in the autophagosome membrane. The protein resides in the mitochondrion outer membrane. Its subcellular location is the cell membrane. It catalyses the reaction H(+)(in) = H(+)(out). Functionally, facilitator of innate immune signaling that acts as a sensor of cytosolic DNA from bacteria and viruses and promotes the production of type I interferon (IFN-alpha and IFN-beta). Innate immune response is triggered in response to non-CpG double-stranded DNA from viruses and bacteria delivered to the cytoplasm. Acts by binding cyclic dinucleotides: recognizes and binds cyclic di-GMP (c-di-GMP), a second messenger produced by bacteria, cyclic UMP-AMP (2',3'-cUAMP), and cyclic GMP-AMP (cGAMP), a messenger produced by CGAS in response to DNA virus in the cytosol. Upon binding to c-di-GMP or cGAMP, STING oligomerizes, translocates from the endoplasmic reticulum and is phosphorylated by TBK1 on the pLxIS motif, leading to recruitment and subsequent activation of the transcription factor IRF3 to induce expression of type I interferon and exert a potent anti-viral state. Exhibits 2',3' phosphodiester linkage-specific ligand recognition: can bind both 2'-3' linked cGAMP (2'-3'-cGAMP) and 3'-3' linked cGAMP but is preferentially activated by 2'-3' linked cGAMP. The preference for 2'-3'-cGAMP, compared to other linkage isomers is probably due to the ligand itself, whichs adopts an organized free-ligand conformation that resembles the STING1-bound conformation and pays low energy costs in changing into the active conformation. In addition to promote the production of type I interferons, plays a direct role in autophagy. Following cGAMP-binding, STING1 buds from the endoplasmic reticulum into COPII vesicles, which then form the endoplasmic reticulum-Golgi intermediate compartment (ERGIC). The ERGIC serves as the membrane source for WIPI2 recruitment and LC3 lipidation, leading to formation of autophagosomes that target cytosolic DNA or DNA viruses for degradation by the lysosome. Promotes autophagy by acting as a proton channel that directs proton efflux from the Golgi to facilitate MAP1LC3B/LC3B lipidation. The autophagy- and interferon-inducing activities can be uncoupled and autophagy induction is independent of TBK1 phosphorylation. Autophagy is also triggered upon infection by bacteria: following c-di-GMP-binding, which is produced by live Gram-positive bacteria, promotes reticulophagy. May be involved in translocon function, the translocon possibly being able to influence the induction of type I interferons. May be involved in transduction of apoptotic signals via its association with the major histocompatibility complex class II (MHC-II). In Bos taurus (Bovine), this protein is Stimulator of interferon genes protein.